Consider the following 458-residue polypeptide: Elongation factor 1-alpha (458 aa).

Gly-2 bears the N,N,N-trimethylglycine; by EFM7 mark. An N6,N6-dimethyllysine; by EFM7; alternate modification is found at Lys-3. At Lys-3 the chain carries N6-methyllysine; by EFM7; alternate. One can recognise a tr-type G domain in the interval 5–240; the sequence is KSHINVVVIG…DAIEQPSRPT (236 aa). Residues 14-21 form a G1 region; the sequence is GHVDSGKS. Ser-18 bears the Phosphoserine mark. Ser-21 and Thr-22 together coordinate GTP. Position 30 is an N6-methyllysine; by EFM1 (Lys-30). Residues 70-74 are G2; it reads GITID. Residue Thr-72 is modified to Phosphothreonine. Position 79 is an N6,N6,N6-trimethyllysine; by EFM5 (Lys-79). Position 82 is a phosphothreonine (Thr-82). The interval 91–94 is G3; that stretch reads DAPG. Positions 153, 154, and 156 each coordinate GTP. The interval 153 to 156 is G4; the sequence is NKMD. Ser-163 carries the post-translational modification Phosphoserine. 3 residues coordinate GTP: Ser-192, Gly-193, and Trp-194. Residues 192 to 194 are G5; sequence SGW. Glycyl lysine isopeptide (Lys-Gly) (interchain with G-Cter in ubiquitin) cross-links involve residues Lys-224, Lys-242, and Lys-253. Thr-259 is subject to Phosphothreonine. Lys-271 participates in a covalent cross-link: Glycyl lysine isopeptide (Lys-Gly) (interchain with G-Cter in ubiquitin). Position 289 is a phosphoserine (Ser-289). Lys-316 carries the post-translational modification N6,N6-dimethyllysine; by EFM4; alternate. The residue at position 316 (Lys-316) is an N6-methyllysine; by EFM4; alternate. N6-methyllysine; by EFM6 is present on Lys-390. Residue Lys-393 forms a Glycyl lysine isopeptide (Lys-Gly) (interchain with G-Cter in ubiquitin) linkage. Ser-414 carries the phosphoserine modification. A Phosphothreonine modification is found at Thr-430. A Glycyl lysine isopeptide (Lys-Gly) (interchain with G-Cter in ubiquitin) cross-link involves residue Lys-437. Lys-458 is modified (lysine methyl ester).

The protein belongs to the TRAFAC class translation factor GTPase superfamily. Classic translation factor GTPase family. EF-Tu/EF-1A subfamily. The eukaryotic elongation factor 1 complex (eEF1) is probably a heterohexamer. Two trimeric complexes, each composed of eEF1A (TEF1 or TEF2), eEF1Balpha (EFB1) and eEF1Bgamma (CAM1 or TEF4), are probably dimerized via the eF1Bgamma subunits. Interacts with eEF1Balpha; the interaction is direct. Interacts with GCN2 (via C-terminus); this interaction is direct, occurs in amino acid-repleted cells, may be stabilized in a ribosome-dependent manner, reduces GCN2-mediated eIF-2-alpha phosphorylation and is lost in amino acid-starved cells and by uncharged tRNAs. Interacts with CEX1. Interacts with elongation factor 3 (YEF3 or HEF3). Interacts with NAP1. Interacts with SRV2. Interacts with chaperone ZPR1; the interaction is required for its proper folding. Binds to actin and forms a ternary complex with BNI1 and profilin. Interacts with the proteasome, probably via RPT1. Associates with ribosomes. In terms of processing, S-thiolated in response to oxidative stress, probably inhibiting the protein and causing a reduction in protein synthesis. Glutaminylated at Glu-45. An L-glutamine is linked to Glu-45 via the alpha amino group. This glutaminylation is yeast-specific and not essential for the normal functions of eEF1A. However, eEF1A glutaminylation slightly reduced growth under antibiotic-induced translational stress conditions.

It localises to the cytoplasm. The protein resides in the cytoskeleton. It functions in the pathway protein biosynthesis; polypeptide chain elongation. Its activity is regulated as follows. Inhibited by narciclasine. GTP-binding component of the eukaryotic elongation factor 1 complex (eEF1). In its active GTP-bound form, binds to and delivers aminoacyl-tRNA to the A-site of ribosomes during protein biosynthesis. In the presence of a correct codon-anticodon match between the aminoacyl-tRNA and the A-site codon of the ribosome-bound mRNA, the ribosome acts as a GTPase activator and the GTP is hydrolyzed. The inactive GDP-bound form leaves the ribosome and must be recycled by its guanine nucleotide exchange factor (GEF) (eEF1B subcomplex) before binding another molecule of aminoacyl-tRNA. Required for nuclear export of aminoacyl-tRNAs. May also be involved in translational quality control by targeting cotranslationally damaged proteins to the proteasome. Also exhibits actin filament-binding and -bundling activities and is involved in cytoskeleton organization. Plays a role as a negative regulator of GCN2 kinase activity by inhibiting GCN2-mediated eIF-2-alpha phosphorylation in amino acid-repleted cells. The chain is Elongation factor 1-alpha (TEF1) from Saccharomyces cerevisiae (strain ATCC 204508 / S288c) (Baker's yeast).